The following is a 357-amino-acid chain: Probable cinnamyl alcohol dehydrogenase 2 (357 aa).

A Zn(2+)-binding site is contributed by C47. Residue S49 participates in NADP(+) binding. Zn(2+) is bound by residues H69, E70, C100, C103, C106, C114, and C163. Residues T167, 188–193, 211–216, T251, G275, and 298–300 contribute to the NADP(+) site; these read GLGGVG, SSSNKK, and SFI.

It belongs to the zinc-containing alcohol dehydrogenase family. In terms of assembly, homodimer. The cofactor is Zn(2+). The N-terminus is blocked.

It catalyses the reaction (E)-cinnamyl alcohol + NADP(+) = (E)-cinnamaldehyde + NADPH + H(+). The catalysed reaction is (E)-coniferol + NADP(+) = (E)-coniferaldehyde + NADPH + H(+). It carries out the reaction (E)-sinapyl alcohol + NADP(+) = (E)-sinapaldehyde + NADPH + H(+). The enzyme catalyses (E)-4-coumaroyl alcohol + NADP(+) = (E)-4-coumaraldehyde + NADPH + H(+). It catalyses the reaction (E)-caffeyl alcohol + NADP(+) = (E)-caffeyl aldehyde + NADPH + H(+). The protein operates within aromatic compound metabolism; phenylpropanoid biosynthesis. Involved in lignin biosynthesis. Catalyzes the final step specific for the production of lignin monomers. Catalyzes the NADPH-dependent reduction of coniferaldehyde, 5-hydroxyconiferaldehyde, sinapaldehyde, 4-coumaraldehyde and caffeyl aldehyde to their respective alcohols. The polypeptide is Probable cinnamyl alcohol dehydrogenase 2 (CAD19) (Nicotiana tabacum (Common tobacco)).